Reading from the N-terminus, the 68-residue chain is Small ribosomal subunit protein bS21 (68 aa).

The protein belongs to the bacterial ribosomal protein bS21 family.

The sequence is that of Small ribosomal subunit protein bS21 from Ruegeria sp. (strain TM1040) (Silicibacter sp.).